We begin with the raw amino-acid sequence, 151 residues long: Cytochrome c-type biogenesis protein CcmE (151 aa).

The Cytoplasmic segment spans residues 1–9; the sequence is MKGLKKKRR. The helical; Signal-anchor for type II membrane protein transmembrane segment at 10–30 threads the bilayer; that stretch reads IQIIALAFVALAGSTALIGYA. At 31 to 151 the chain is on the periplasmic side; the sequence is MRDGINFFRS…FQHTEDQPQG (121 aa). Residues H123 and Y127 each coordinate heme.

This sequence belongs to the CcmE/CycJ family.

It localises to the cell inner membrane. Its function is as follows. Heme chaperone required for the biogenesis of c-type cytochromes. Transiently binds heme delivered by CcmC and transfers the heme to apo-cytochromes in a process facilitated by CcmF and CcmH. The chain is Cytochrome c-type biogenesis protein CcmE from Cereibacter sphaeroides (strain ATCC 17029 / ATH 2.4.9) (Rhodobacter sphaeroides).